A 333-amino-acid chain; its full sequence is L-lactate dehydrogenase B chain (333 aa).

NAD(+) is bound by residues 29 to 57 (GQVG…LEDK) and arginine 99. Arginine 106, asparagine 138, and arginine 169 together coordinate substrate. NAD(+) is bound at residue asparagine 138. The Proton acceptor role is filled by histidine 193. Threonine 248 contributes to the substrate binding site.

This sequence belongs to the LDH/MDH superfamily. LDH family. Homotetramer.

Its subcellular location is the cytoplasm. The enzyme catalyses (S)-lactate + NAD(+) = pyruvate + NADH + H(+). Its pathway is fermentation; pyruvate fermentation to lactate; (S)-lactate from pyruvate: step 1/1. Functionally, interconverts simultaneously and stereospecifically pyruvate and lactate with concomitant interconversion of NADH and NAD(+). This Caiman crocodilus apaporiensis (Rio Apaporis caiman) protein is L-lactate dehydrogenase B chain (LDHB).